Reading from the N-terminus, the 149-residue chain is Ribonuclease H (149 aa).

The RNase H type-1 domain occupies 1 to 145; sequence MKKVIIYTDG…CDKLANEAMD (145 aa). Residues D9, E50, D72, and D137 each coordinate Mg(2+).

It belongs to the RNase H family. As to quaternary structure, monomer. The cofactor is Mg(2+).

It localises to the cytoplasm. It catalyses the reaction Endonucleolytic cleavage to 5'-phosphomonoester.. In terms of biological role, endonuclease that specifically degrades the RNA of RNA-DNA hybrids. The sequence is that of Ribonuclease H from Clostridium botulinum (strain ATCC 19397 / Type A).